The following is a 170-amino-acid chain: Peptide deformylase (170 aa).

Residues C93 and H135 each contribute to the Fe cation site. Residue E136 is part of the active site. H139 is a binding site for Fe cation.

This sequence belongs to the polypeptide deformylase family. The cofactor is Fe(2+).

The enzyme catalyses N-terminal N-formyl-L-methionyl-[peptide] + H2O = N-terminal L-methionyl-[peptide] + formate. Functionally, removes the formyl group from the N-terminal Met of newly synthesized proteins. Requires at least a dipeptide for an efficient rate of reaction. N-terminal L-methionine is a prerequisite for activity but the enzyme has broad specificity at other positions. In Syntrophobacter fumaroxidans (strain DSM 10017 / MPOB), this protein is Peptide deformylase.